Here is a 213-residue protein sequence, read N- to C-terminus: Thiamine-phosphate synthase (213 aa).

4-amino-2-methyl-5-(diphosphooxymethyl)pyrimidine contacts are provided by residues 38–42 (QLREK) and asparagine 73. Positions 74 and 93 each coordinate Mg(2+). Serine 111 contacts 4-amino-2-methyl-5-(diphosphooxymethyl)pyrimidine. 137-139 (TTS) provides a ligand contact to 2-[(2R,5Z)-2-carboxy-4-methylthiazol-5(2H)-ylidene]ethyl phosphate. Lysine 140 is a 4-amino-2-methyl-5-(diphosphooxymethyl)pyrimidine binding site. 2-[(2R,5Z)-2-carboxy-4-methylthiazol-5(2H)-ylidene]ethyl phosphate is bound by residues glycine 169 and 189–190 (IS).

This sequence belongs to the thiamine-phosphate synthase family. Mg(2+) is required as a cofactor.

The enzyme catalyses 2-[(2R,5Z)-2-carboxy-4-methylthiazol-5(2H)-ylidene]ethyl phosphate + 4-amino-2-methyl-5-(diphosphooxymethyl)pyrimidine + 2 H(+) = thiamine phosphate + CO2 + diphosphate. The catalysed reaction is 2-(2-carboxy-4-methylthiazol-5-yl)ethyl phosphate + 4-amino-2-methyl-5-(diphosphooxymethyl)pyrimidine + 2 H(+) = thiamine phosphate + CO2 + diphosphate. It carries out the reaction 4-methyl-5-(2-phosphooxyethyl)-thiazole + 4-amino-2-methyl-5-(diphosphooxymethyl)pyrimidine + H(+) = thiamine phosphate + diphosphate. Its pathway is cofactor biosynthesis; thiamine diphosphate biosynthesis; thiamine phosphate from 4-amino-2-methyl-5-diphosphomethylpyrimidine and 4-methyl-5-(2-phosphoethyl)-thiazole: step 1/1. Functionally, condenses 4-methyl-5-(beta-hydroxyethyl)thiazole monophosphate (THZ-P) and 2-methyl-4-amino-5-hydroxymethyl pyrimidine pyrophosphate (HMP-PP) to form thiamine monophosphate (TMP). The polypeptide is Thiamine-phosphate synthase (Lysinibacillus sphaericus (strain C3-41)).